Consider the following 230-residue polypeptide: Large ribosomal subunit protein uL1 (230 aa).

Belongs to the universal ribosomal protein uL1 family. Part of the 50S ribosomal subunit.

Functionally, binds directly to 23S rRNA. The L1 stalk is quite mobile in the ribosome, and is involved in E site tRNA release. Its function is as follows. Protein L1 is also a translational repressor protein, it controls the translation of the L11 operon by binding to its mRNA. In Bifidobacterium longum (strain DJO10A), this protein is Large ribosomal subunit protein uL1.